A 713-amino-acid polypeptide reads, in one-letter code: Glutamine-dependent NAD(+) synthetase (713 aa).

The CN hydrolase domain occupies 4-275; it reads VTLATCNLNQ…IEVITATVDL (272 aa). E44 (proton acceptor; for glutaminase activity) is an active-site residue. K114 serves as the catalytic For glutaminase activity. The active-site Nucleophile; for glutaminase activity is the C175. Positions 324-703 are ligase; that stretch reads YNTPAEEIGF…QRPQLKNTVN (380 aa). An ATP-binding site is contributed by 354–361; it reads PLSGGADS. The active site involves S356.

It in the C-terminal section; belongs to the NAD synthetase family.

The catalysed reaction is deamido-NAD(+) + L-glutamine + ATP + H2O = L-glutamate + AMP + diphosphate + NAD(+) + H(+). The protein operates within cofactor biosynthesis; NAD(+) biosynthesis; NAD(+) from deamido-NAD(+) (L-Gln route): step 1/1. This chain is Glutamine-dependent NAD(+) synthetase (nadsyn1), found in Dictyostelium discoideum (Social amoeba).